The following is a 1342-amino-acid chain: DNA-directed RNA polymerase subunit beta (1342 aa).

This sequence belongs to the RNA polymerase beta chain family. As to quaternary structure, the RNAP catalytic core consists of 2 alpha, 1 beta, 1 beta' and 1 omega subunit. When a sigma factor is associated with the core the holoenzyme is formed, which can initiate transcription.

The catalysed reaction is RNA(n) + a ribonucleoside 5'-triphosphate = RNA(n+1) + diphosphate. In terms of biological role, DNA-dependent RNA polymerase catalyzes the transcription of DNA into RNA using the four ribonucleoside triphosphates as substrates. The sequence is that of DNA-directed RNA polymerase subunit beta from Aeromonas hydrophila subsp. hydrophila (strain ATCC 7966 / DSM 30187 / BCRC 13018 / CCUG 14551 / JCM 1027 / KCTC 2358 / NCIMB 9240 / NCTC 8049).